Here is a 234-residue protein sequence, read N- to C-terminus: MEASDGQADEREEPLEQGTNARSLERRSSTTPAKDSLVRHAKGLDRDTFKICKEYLRPLKKFLRKLHLPKDLPQKKKLKYMKQSLVVLGDHINTFLQHYCRAWEIKHWKKMLWRFVSLFSELEAKQLRKLYKYTKNNQTTKFLMAFCPLDAPESSLLADQEDSLPKLCTAWGLRSHLNGMKERLSKLQAPGHPARLLKELRARGPRRRGSKLPQEPKLKRRRIKEAPDTPETCL.

A disordered region spans residues 1-38 (MEASDGQADEREEPLEQGTNARSLERRSSTTPAKDSLV). The CHD1 helical C-terminal domain (CHCT) stretch occupies residues 44-145 (LDRDTFKICK…NNQTTKFLMA (102 aa)). Residues 200–234 (LRARGPRRRGSKLPQEPKLKRRRIKEAPDTPETCL) are disordered.

The protein resides in the cytoplasm. Its subcellular location is the nucleus. Functionally, may play a role in regulation of apoptosis. The sequence is that of CHD1 helical C-terminal domain containing protein 1 (CHCT1) from Bos taurus (Bovine).